The following is a 435-amino-acid chain: Nucleoredoxin (435 aa).

At Ser2 the chain carries N-acetylserine. Residues 167-321 (PKPFREVIAG…VLELSDSNAV (155 aa)) form the Thioredoxin domain.

This sequence belongs to the nucleoredoxin family. As to quaternary structure, associates with the phosphatase 2A holoenzyme. Interacts with PPP2CA; the interaction is direct. Interacts with DVL1 (via PDZ domain); the interaction is direct and regulated by oxidative stress.

The protein localises to the cytoplasm. The protein resides in the cytosol. It is found in the nucleus. It catalyses the reaction [protein]-dithiol + NAD(+) = [protein]-disulfide + NADH + H(+). The catalysed reaction is [protein]-dithiol + NADP(+) = [protein]-disulfide + NADPH + H(+). Its function is as follows. Functions as a redox-dependent negative regulator of the Wnt signaling pathway, possibly by preventing ubiquitination of DVL3 by the BCR(KLHL12) complex. May also function as a transcriptional regulator act as a regulator of protein phosphatase 2A (PP2A). In Bos taurus (Bovine), this protein is Nucleoredoxin (NXN).